The chain runs to 436 residues: GTPase Der (436 aa).

2 EngA-type G domains span residues 4-167 (PIVA…KEEE) and 176-351 (IRLS…ENHK). GTP-binding positions include 10-17 (GRPNVGKS), 57-61 (DTGGI), 119-122 (NKVD), 182-189 (GRPNVGKS), 229-233 (DTAGM), and 294-297 (NKWD). Residues 352–436 (KRVQSSTLNE…PVHIIARKRN (85 aa)) enclose the KH-like domain.

Belongs to the TRAFAC class TrmE-Era-EngA-EngB-Septin-like GTPase superfamily. EngA (Der) GTPase family. In terms of assembly, associates with the 50S ribosomal subunit.

Its function is as follows. GTPase that plays an essential role in the late steps of ribosome biogenesis. The protein is GTPase Der of Staphylococcus saprophyticus subsp. saprophyticus (strain ATCC 15305 / DSM 20229 / NCIMB 8711 / NCTC 7292 / S-41).